The following is a 207-amino-acid chain: 3,4-dihydroxy-2-butanone 4-phosphate synthase (207 aa).

Residues 28–29 (RE), aspartate 33, 140–144 (RRGHT), and glutamate 164 each bind D-ribulose 5-phosphate. Glutamate 29 serves as a coordination point for Mg(2+). Position 143 (histidine 143) interacts with Mg(2+).

It belongs to the DHBP synthase family. As to quaternary structure, homodimer. Mg(2+) serves as cofactor. Requires Mn(2+) as cofactor.

It catalyses the reaction D-ribulose 5-phosphate = (2S)-2-hydroxy-3-oxobutyl phosphate + formate + H(+). Its pathway is cofactor biosynthesis; riboflavin biosynthesis; 2-hydroxy-3-oxobutyl phosphate from D-ribulose 5-phosphate: step 1/1. Functionally, catalyzes the conversion of D-ribulose 5-phosphate to formate and 3,4-dihydroxy-2-butanone 4-phosphate. The sequence is that of 3,4-dihydroxy-2-butanone 4-phosphate synthase from Oceanobacillus iheyensis (strain DSM 14371 / CIP 107618 / JCM 11309 / KCTC 3954 / HTE831).